A 205-amino-acid polypeptide reads, in one-letter code: Small ribosomal subunit protein uS4 (205 aa).

A disordered region spans residues 18–46; that stretch reads NIWGRPKSPVNSRAYGPGQHGQRRKSKVS. Positions 94–155 constitute an S4 RNA-binding domain; the sequence is SRLDAVVYRA…RSRNMALVLE (62 aa).

Belongs to the universal ribosomal protein uS4 family. In terms of assembly, part of the 30S ribosomal subunit. Contacts protein S5. The interaction surface between S4 and S5 is involved in control of translational fidelity.

One of the primary rRNA binding proteins, it binds directly to 16S rRNA where it nucleates assembly of the body of the 30S subunit. In terms of biological role, with S5 and S12 plays an important role in translational accuracy. The chain is Small ribosomal subunit protein uS4 from Phenylobacterium zucineum (strain HLK1).